Reading from the N-terminus, the 753-residue chain is Rho guanine nucleotide exchange factor gef1 (753 aa).

3 disordered regions span residues 52–150, 175–194, and 200–245; these read SNSY…DRNR, TLRK…RVSG, and AQNS…ASLL. Polar residues-rich tracts occupy residues 94-105, 114-141, 181-191, and 200-220; these read DPQTPNTPPVSS, GSFN…TLTP, TNTSSNGTSRR, and AQNS…GSST. Low complexity predominate over residues 230–245; it reads TLASMPSSHSSTASLL. The region spanning 311–507 is the DH domain; that stretch reads KRANLIKELV…QELISGINQK (197 aa).

As to quaternary structure, interacts with cdc42.

It is found in the cytoplasm. Functionally, has a role in the control of cell polarity and cytokinesis. Involved in bipolar growth, via modulation of cdc42-shk1-orb6 signaling, and septum formation. Stimulates guanine nucleotide exchange of cdc42. The chain is Rho guanine nucleotide exchange factor gef1 (gef1) from Schizosaccharomyces pombe (strain 972 / ATCC 24843) (Fission yeast).